Consider the following 345-residue polypeptide: Histidinol-phosphate aminotransferase (345 aa).

Lys-205 is subject to N6-(pyridoxal phosphate)lysine.

Belongs to the class-II pyridoxal-phosphate-dependent aminotransferase family. Histidinol-phosphate aminotransferase subfamily. Homodimer. Pyridoxal 5'-phosphate is required as a cofactor.

The catalysed reaction is L-histidinol phosphate + 2-oxoglutarate = 3-(imidazol-4-yl)-2-oxopropyl phosphate + L-glutamate. It participates in amino-acid biosynthesis; L-histidine biosynthesis; L-histidine from 5-phospho-alpha-D-ribose 1-diphosphate: step 7/9. This chain is Histidinol-phosphate aminotransferase, found in Parabacteroides distasonis (strain ATCC 8503 / DSM 20701 / CIP 104284 / JCM 5825 / NCTC 11152).